A 201-amino-acid polypeptide reads, in one-letter code: Retinol-binding protein 4 (201 aa).

Residues 1 to 18 (MKWVWALLLLAALGSGRA) form the signal peptide. 3 cysteine pairs are disulfide-bonded: C22-C178, C88-C192, and C138-C147. A substrate-binding site is contributed by Q116. An Omega-N-methylarginine modification is found at R139.

The protein belongs to the calycin superfamily. Lipocalin family. As to quaternary structure, interacts with TTR. Interaction with TTR prevents its loss by filtration through the kidney glomeruli. Interacts with STRA6. In terms of tissue distribution, detected in blood plasma and in urine (at protein level).

Its subcellular location is the secreted. Its function is as follows. Retinol-binding protein that mediates retinol transport in blood plasma. Delivers retinol from the liver stores to the peripheral tissues. Transfers the bound all-trans retinol to STRA6, that then facilitates retinol transport across the cell membrane. In Homo sapiens (Human), this protein is Retinol-binding protein 4 (RBP4).